Consider the following 92-residue polypeptide: N(2)-fixation sustaining protein CowN (92 aa).

The protein belongs to the CowN family.

In terms of biological role, is required to sustain N(2)-dependent growth in the presence of low levels of carbon monoxide (CO). Probably acts by protecting the N(2) fixation ability of the nitrogenase complex, which is inactivated in the presence of CO. In Cereibacter sphaeroides (strain ATCC 17025 / ATH 2.4.3) (Rhodobacter sphaeroides), this protein is N(2)-fixation sustaining protein CowN.